The sequence spans 272 residues: Endoplasmic reticulum resident protein 27 (272 aa).

The signal sequence occupies residues 1 to 25 (MKITRSRCLILSFVLVCGLVPEVTA). A Thioredoxin domain is found at 39–152 (EPIWLTDVPA…WVTEYSPMIA (114 aa)). Residues Asn-91 and Asn-100 are each glycosylated (N-linked (GlcNAc...) asparagine). The segment at 230 to 233 (DKWD) is PDIA3-binding site. The short motif at 269–272 (KEEL) is the Prevents secretion from ER element.

The protein belongs to the protein disulfide isomerase family. As to quaternary structure, interacts with PDIA3.

The protein localises to the endoplasmic reticulum lumen. In terms of biological role, specifically binds unfolded proteins and may recruit protein disulfide isomerase PDIA3 to unfolded substrates. Binds protein substrates via a hydrophobic pocket in the C-terminal domain. May play a role in the unfolded stress response. In Mus musculus (Mouse), this protein is Endoplasmic reticulum resident protein 27 (Erp27).